Reading from the N-terminus, the 276-residue chain is Small ribosomal subunit protein uS3 (276 aa).

The 72-residue stretch at isoleucine 39–lysine 110 folds into the KH type-2 domain.

This sequence belongs to the universal ribosomal protein uS3 family. In terms of assembly, part of the 30S ribosomal subunit. Forms a tight complex with proteins S10 and S14.

Functionally, binds the lower part of the 30S subunit head. Binds mRNA in the 70S ribosome, positioning it for translation. The polypeptide is Small ribosomal subunit protein uS3 (Borrelia recurrentis (strain A1)).